The chain runs to 121 residues: Large ribosomal subunit protein bL12 (121 aa).

Belongs to the bacterial ribosomal protein bL12 family. Homodimer. Part of the ribosomal stalk of the 50S ribosomal subunit. Forms a multimeric L10(L12)X complex, where L10 forms an elongated spine to which 2 to 4 L12 dimers bind in a sequential fashion. Binds GTP-bound translation factors.

Its function is as follows. Forms part of the ribosomal stalk which helps the ribosome interact with GTP-bound translation factors. Is thus essential for accurate translation. The protein is Large ribosomal subunit protein bL12 of Mesomycoplasma hyopneumoniae (strain 7448) (Mycoplasma hyopneumoniae).